The following is a 233-amino-acid chain: tRNA (guanine-N(1)-)-methyltransferase (233 aa).

S-adenosyl-L-methionine is bound by residues Gly-110 and 130-135 (IGDYVM).

The protein belongs to the RNA methyltransferase TrmD family. In terms of assembly, homodimer.

It localises to the cytoplasm. It carries out the reaction guanosine(37) in tRNA + S-adenosyl-L-methionine = N(1)-methylguanosine(37) in tRNA + S-adenosyl-L-homocysteine + H(+). Functionally, specifically methylates guanosine-37 in various tRNAs. This is tRNA (guanine-N(1)-)-methyltransferase from Finegoldia magna (strain ATCC 29328 / DSM 20472 / WAL 2508) (Peptostreptococcus magnus).